Here is a 160-residue protein sequence, read N- to C-terminus: Troponin C, skeletal muscle (160 aa).

At Thr-2 the chain carries N-acetylthreonine. 4 consecutive EF-hand domains span residues Glu-15 to Thr-50, Pro-51 to Glu-86, Lys-91 to His-126, and Val-127 to Gln-160. Residues Asp-28, Asp-30, Asp-34, Glu-39, Asp-64, Asp-66, Ser-68, Thr-70, Glu-75, Asp-104, Asn-106, Asp-108, Tyr-110, Glu-115, Asp-140, Asn-142, Asp-144, Arg-146, and Glu-151 each coordinate Ca(2+).

It belongs to the troponin C family.

In terms of biological role, troponin is the central regulatory protein of striated muscle contraction. Tn consists of three components: Tn-I which is the inhibitor of actomyosin ATPase, Tn-T which contains the binding site for tropomyosin and Tn-C. The binding of calcium to Tn-C abolishes the inhibitory action of Tn on actin filaments. In Oryctolagus cuniculus (Rabbit), this protein is Troponin C, skeletal muscle (TNNC2).